The primary structure comprises 113 residues: Non-specific lipid-transfer protein 6 (113 aa).

An N-terminal signal peptide occupies residues 1–19 (MRSLLLAVCLVLALHCGEA). 4 cysteine pairs are disulfide-bonded: Cys-23-Cys-70, Cys-33-Cys-47, Cys-48-Cys-95, and Cys-68-Cys-109.

This sequence belongs to the plant LTP family.

Functionally, plant non-specific lipid-transfer proteins transfer phospholipids as well as galactolipids across membranes. May play a role in wax or cutin deposition in the cell walls of expanding epidermal cells and certain secretory tissues. In Arabidopsis thaliana (Mouse-ear cress), this protein is Non-specific lipid-transfer protein 6 (LTP6).